The following is a 287-amino-acid chain: Phospholipid phosphatase 2 (287 aa).

At methionine 1–arginine 4 the chain is on the cytoplasmic side. A helical transmembrane segment spans residues tryptophan 5–leucine 25. The Lumenal segment spans residues threonine 26 to threonine 51. The helical transmembrane segment at isoleucine 52 to glycine 72 threads the bilayer. The Cytoplasmic portion of the chain corresponds to glutamate 73–aspartate 87. A helical membrane pass occupies residues phenylalanine 88–valine 108. At serine 109–leucine 161 the chain is on the lumenal side. Residues lysine 117–proline 125 form a phosphatase sequence motif I region. Residues asparagine 139 and asparagine 155 are each glycosylated (N-linked (GlcNAc...) asparagine). Residues serine 162–valine 182 traverse the membrane as a helical segment. Residues tyrosine 164–histidine 167 are phosphatase sequence motif II. The active-site Proton donors is the histidine 167. Residues glutamine 183–leucine 193 are Cytoplasmic-facing. A helical transmembrane segment spans residues leucine 194–tyrosine 211. Residues threonine 212 to lysine 218 lie on the Lumenal side of the membrane. Positions threonine 212–aspartate 223 are phosphatase sequence motif III. Histidine 219 functions as the Nucleophile in the catalytic mechanism. A helical transmembrane segment spans residues histidine 219 to valine 239. The Cytoplasmic portion of the chain corresponds to arginine 240–serine 287.

This sequence belongs to the PA-phosphatase related phosphoesterase family. As to quaternary structure, forms functional homodimers and homooligomers. Can also form heterooligomers with PLPP1 and PLPP3. In terms of processing, N-glycosylated.

It localises to the membrane. The protein localises to the cell membrane. The protein resides in the early endosome membrane. Its subcellular location is the endoplasmic reticulum membrane. The enzyme catalyses a 1,2-diacyl-sn-glycero-3-phosphate + H2O = a 1,2-diacyl-sn-glycerol + phosphate. The catalysed reaction is 1,2-dihexadecanoyl-sn-glycero-3-phosphate + H2O = 1,2-dihexadecanoyl-sn-glycerol + phosphate. It carries out the reaction 1,2-di-(9Z-octadecenoyl)-sn-glycero-3-phosphate + H2O = 1,2-di-(9Z-octadecenoyl)-sn-glycerol + phosphate. It catalyses the reaction a monoacyl-sn-glycero-3-phosphate + H2O = a monoacylglycerol + phosphate. The enzyme catalyses (9Z)-octadecenoyl-sn-glycero-3-phosphate + H2O = (9Z-octadecenoyl)-glycerol + phosphate. The catalysed reaction is sphing-4-enine 1-phosphate + H2O = sphing-4-enine + phosphate. It carries out the reaction an N-acylsphing-4-enine 1-phosphate + H2O = an N-acylsphing-4-enine + phosphate. It catalyses the reaction N-(octanoyl)-sphing-4-enine-1-phosphate + H2O = N-octanoylsphing-4-enine + phosphate. The enzyme catalyses N-(9Z-octadecenoyl)-ethanolamine phosphate + H2O = N-(9Z-octadecenoyl) ethanolamine + phosphate. It functions in the pathway lipid metabolism; phospholipid metabolism. With respect to regulation, magnesium-independent phospholipid phosphatase. Insensitive to N-ethylmaleimide. Functionally, magnesium-independent phospholipid phosphatase that catalyzes the dephosphorylation of a variety of glycerolipid and sphingolipid phosphate esters including phosphatidate/PA, lysophosphatidate/LPA, sphingosine 1-phosphate/S1P and ceramide 1-phosphate/C1P. Has no apparent extracellular phosphatase activity and therefore most probably acts intracellularly. Also acts on N-oleoyl ethanolamine phosphate/N-(9Z-octadecenoyl)-ethanolamine phosphate, a potential physiological compound. Through dephosphorylation of these bioactive lipid mediators produces new bioactive compounds and may regulate signal transduction in different cellular processes. Indirectly regulates, for instance, cell cycle G1/S phase transition through its phospholipid phosphatase activity. This is Phospholipid phosphatase 2 from Bos taurus (Bovine).